Reading from the N-terminus, the 449-residue chain is Phosphoglucosamine mutase (449 aa).

Ser104 serves as the catalytic Phosphoserine intermediate. Mg(2+) is bound by residues Ser104, Asp243, Asp245, and Asp247. Ser104 bears the Phosphoserine mark.

Belongs to the phosphohexose mutase family. The cofactor is Mg(2+). Post-translationally, activated by phosphorylation.

It carries out the reaction alpha-D-glucosamine 1-phosphate = D-glucosamine 6-phosphate. Functionally, catalyzes the conversion of glucosamine-6-phosphate to glucosamine-1-phosphate. This Xanthomonas axonopodis pv. citri (strain 306) protein is Phosphoglucosamine mutase.